The primary structure comprises 1023 residues: RTX-I toxin determinant A from serotypes 5/10 (1023 aa).

3 helical membrane-spanning segments follow: residues 226–256, 297–326, and 367–406; these read NNLPDLSLAGPGFDAVSGILSVVSASFILSN, STTAATGGLIGSVVALAISPLSFLNVADKF, and INSVLSAASAGVGAAATGSLVGAPVAALVSAITGIISGIL. Hemolysin-type calcium-binding repeat units follow at residues 730–747, 748–765, 766–783, 784–801, 812–829, and 830–847; these read FGSRFTDIFHGAKGDDEI, YGNDGHDILYGDDGNDVI, HGGDGNDHLVGGNGNDRL, IGGKGNNFLNGGDGDDEL, LGGAGNDILYGSDGTNLF, and DGGVGNDKIYGGLGKDIY.

The protein belongs to the RTX prokaryotic toxin (TC 1.C.11) family. Palmitoylated by ApxIC. The toxin only becomes active when modified.

It localises to the secreted. The protein resides in the host cell membrane. In terms of biological role, one of the virulence factors of A.pleuropneumoniae, which has a strong hemolytic activity and is cytotoxic for alveolar macrophages and neutrophils. This is RTX-I toxin determinant A from serotypes 5/10 (apxIA) from Actinobacillus pleuropneumoniae (Haemophilus pleuropneumoniae).